Here is a 476-residue protein sequence, read N- to C-terminus: Bifunctional protein HldE (476 aa).

The tract at residues 1–319 (MKISLPAFEK…EALSLSHGES (319 aa)) is ribokinase. An ATP-binding site is contributed by 195-198 (NMSE). Residue aspartate 264 is part of the active site. Residues 345 to 476 (MTNGCFDILH…AIIQNIMANQ (132 aa)) form a cytidylyltransferase region.

This sequence in the N-terminal section; belongs to the carbohydrate kinase PfkB family. It in the C-terminal section; belongs to the cytidylyltransferase family. As to quaternary structure, homodimer.

It carries out the reaction D-glycero-beta-D-manno-heptose 7-phosphate + ATP = D-glycero-beta-D-manno-heptose 1,7-bisphosphate + ADP + H(+). The enzyme catalyses D-glycero-beta-D-manno-heptose 1-phosphate + ATP + H(+) = ADP-D-glycero-beta-D-manno-heptose + diphosphate. The protein operates within nucleotide-sugar biosynthesis; ADP-L-glycero-beta-D-manno-heptose biosynthesis; ADP-L-glycero-beta-D-manno-heptose from D-glycero-beta-D-manno-heptose 7-phosphate: step 1/4. It functions in the pathway nucleotide-sugar biosynthesis; ADP-L-glycero-beta-D-manno-heptose biosynthesis; ADP-L-glycero-beta-D-manno-heptose from D-glycero-beta-D-manno-heptose 7-phosphate: step 3/4. Functionally, catalyzes the phosphorylation of D-glycero-D-manno-heptose 7-phosphate at the C-1 position to selectively form D-glycero-beta-D-manno-heptose-1,7-bisphosphate. Catalyzes the ADP transfer from ATP to D-glycero-beta-D-manno-heptose 1-phosphate, yielding ADP-D-glycero-beta-D-manno-heptose. The sequence is that of Bifunctional protein HldE from Shewanella pealeana (strain ATCC 700345 / ANG-SQ1).